Here is a 158-residue protein sequence, read N- to C-terminus: C-type lectin BfL-2 (158 aa).

An N-terminal signal peptide occupies residues 1-21; sequence MGHFTFIGLCLLAMFLSLSGA. Cystine bridges form between Cys-26-Cys-37, Cys-54-Cys-154, Cys-61-Cys-156, and Cys-129-Cys-146. The C-type lectin domain maps to 33 to 155; it reads KNGLCYKVFS…CETLHPFICQ (123 aa). The Mannose-binding motif lies at 119–121; it reads EPN. Asn-121 carries an N-linked (GlcNAc...) asparagine glycan. Glu-127, Asn-142, and Asp-143 together coordinate Ca(2+).

This sequence belongs to the true venom lectin family. In terms of assembly, homodimer; non-covalently linked. As to expression, expressed by the venom gland.

Its subcellular location is the secreted. Mannose-binding lectin which recognizes specific carbohydrate structures and agglutinates a variety of animal cells by binding to cell-surface glycoproteins and glycolipids. May be a calcium-dependent lectin. The chain is C-type lectin BfL-2 from Bungarus fasciatus (Banded krait).